A 36-amino-acid chain; its full sequence is Kappa-isophellitoxin-Tst1a (36 aa).

The region spanning 2-36 is the ShKT domain; it reads CENNFSDRECERRKKDCDSSMKFRELSCPKTCGTC. 3 cysteine pairs are disulfide-bonded: C2–C36, C11–C29, and C18–C33.

The protein belongs to the sea anemone type 1 potassium channel toxin family. Type 1a subfamily. In terms of tissue distribution, predominantly expressed in mesenterial filaments (at protein level), a morphological structure that has a functional role in prey killing and digestion. Also expressed in club-tips, tentacles, actinopharynx, body column, mesenterial filaments and pedal disk.

It localises to the secreted. The protein localises to the nematocyst. Probable toxin with unknown function. Does not inhibit all channels tested. Is not cytotoxic on macrophage. The protein is Kappa-isophellitoxin-Tst1a of Telmatactis stephensoni (Sea anemone).